The following is a 202-amino-acid chain: Thymidylate kinase (202 aa).

Position 7–14 (Gly7–Thr14) interacts with ATP.

Belongs to the thymidylate kinase family.

The catalysed reaction is dTMP + ATP = dTDP + ADP. Phosphorylation of dTMP to form dTDP in both de novo and salvage pathways of dTTP synthesis. This is Thymidylate kinase from Ehrlichia canis (strain Jake).